The chain runs to 244 residues: GTP cyclohydrolase 1 type 2 homolog (244 aa).

Histidine 65, histidine 66, aspartate 102, histidine 216, and glutamate 220 together coordinate a divalent metal cation.

Belongs to the GTP cyclohydrolase I type 2/NIF3 family. Homohexamer; trimer of dimers, that forms a hollow cage-like architecture.

Its function is as follows. DNA-binding protein exhibiting the ability to bind to both single-stranded and double-stranded DNA. In Methanocaldococcus jannaschii (strain ATCC 43067 / DSM 2661 / JAL-1 / JCM 10045 / NBRC 100440) (Methanococcus jannaschii), this protein is GTP cyclohydrolase 1 type 2 homolog.